Here is a 472-residue protein sequence, read N- to C-terminus: Ribosomal RNA small subunit methyltransferase F (472 aa).

S-adenosyl-L-methionine-binding positions include 123–129, E147, D174, and D192; that span reads AAAPGSK. The Nucleophile role is filled by C245.

This sequence belongs to the class I-like SAM-binding methyltransferase superfamily. RsmB/NOP family.

The protein resides in the cytoplasm. The enzyme catalyses cytidine(1407) in 16S rRNA + S-adenosyl-L-methionine = 5-methylcytidine(1407) in 16S rRNA + S-adenosyl-L-homocysteine + H(+). In terms of biological role, specifically methylates the cytosine at position 1407 (m5C1407) of 16S rRNA. The polypeptide is Ribosomal RNA small subunit methyltransferase F (Vibrio vulnificus (strain CMCP6)).